A 255-amino-acid chain; its full sequence is Octanoyltransferase (255 aa).

Positions 54 to 238 (GDAAELVWLL…AFTEIFGATV (185 aa)) constitute a BPL/LPL catalytic domain. Residues 92–99 (RGGQLTYH), 167–169 (AIG), and 180–182 (GIA) contribute to the substrate site. Cys198 (acyl-thioester intermediate) is an active-site residue.

It belongs to the LipB family.

Its subcellular location is the cytoplasm. The enzyme catalyses octanoyl-[ACP] + L-lysyl-[protein] = N(6)-octanoyl-L-lysyl-[protein] + holo-[ACP] + H(+). It participates in protein modification; protein lipoylation via endogenous pathway; protein N(6)-(lipoyl)lysine from octanoyl-[acyl-carrier-protein]: step 1/2. Catalyzes the transfer of endogenously produced octanoic acid from octanoyl-acyl-carrier-protein onto the lipoyl domains of lipoate-dependent enzymes. Lipoyl-ACP can also act as a substrate although octanoyl-ACP is likely to be the physiological substrate. In Rhodopseudomonas palustris (strain HaA2), this protein is Octanoyltransferase.